The primary structure comprises 194 residues: ATP synthase subunit b 1 (194 aa).

A helical transmembrane segment spans residues Met-1–Asp-21.

The protein belongs to the ATPase B chain family. F-type ATPases have 2 components, F(1) - the catalytic core - and F(0) - the membrane proton channel. F(1) has five subunits: alpha(3), beta(3), gamma(1), delta(1), epsilon(1). F(0) has three main subunits: a(1), b(2) and c(10-14). The alpha and beta chains form an alternating ring which encloses part of the gamma chain. F(1) is attached to F(0) by a central stalk formed by the gamma and epsilon chains, while a peripheral stalk is formed by the delta and b chains.

Its subcellular location is the cell inner membrane. In terms of biological role, f(1)F(0) ATP synthase produces ATP from ADP in the presence of a proton or sodium gradient. F-type ATPases consist of two structural domains, F(1) containing the extramembraneous catalytic core and F(0) containing the membrane proton channel, linked together by a central stalk and a peripheral stalk. During catalysis, ATP synthesis in the catalytic domain of F(1) is coupled via a rotary mechanism of the central stalk subunits to proton translocation. Component of the F(0) channel, it forms part of the peripheral stalk, linking F(1) to F(0). In Granulibacter bethesdensis (strain ATCC BAA-1260 / CGDNIH1), this protein is ATP synthase subunit b 1.